Here is a 432-residue protein sequence, read N- to C-terminus: Vacuolar protein sorting-associated protein 38 (432 aa).

A glycan (N-linked (GlcNAc...) asparagine) is linked at N20. A coiled-coil region spans residues 216 to 287; that stretch reads LDTYQENIKM…KEAIEKLQKK (72 aa). The helical transmembrane segment at 348-365 threads the bilayer; the sequence is IINAMLGFYSLFIVIYSY.

This sequence belongs to the VPS38 family. Component of the VPS34 PI3-kinase complex II composed of VPS15, VPS30, VPS34 and VPS38.

The protein localises to the golgi apparatus. It is found in the trans-Golgi network membrane. Its subcellular location is the endosome membrane. In terms of biological role, involved in endosome-to-Golgi retrograde transport as part of the VPS34 PI3-kinase complex II. This complex is required for the endosome-to-Golgi retrieval of PEP1 and KEX2, and the recruitment of VPS5 and VPS7, two components of the retromer complex, to endosomal membranes (probably through generating a specific pool of phosphatidylinositol 3-phosphate allowing the recruitment of the retromer complex proteins to the endosome). Mediates the interaction between VPS30 and the VPS34-VPS15 core complex, leading to the recruitment of VPS30 to the membrane. The protein is Vacuolar protein sorting-associated protein 38 of Candida glabrata (strain ATCC 2001 / BCRC 20586 / JCM 3761 / NBRC 0622 / NRRL Y-65 / CBS 138) (Yeast).